The following is a 335-amino-acid chain: Fructose-1,6-bisphosphatase class 1 (335 aa).

Residues Glu90, Asp112, Leu114, and Asp115 each coordinate Mg(2+). Substrate contacts are provided by residues 115–118 (DGSS), Asn210, and Lys276. Glu282 serves as a coordination point for Mg(2+).

This sequence belongs to the FBPase class 1 family. As to quaternary structure, homotetramer. It depends on Mg(2+) as a cofactor.

The protein localises to the cytoplasm. The catalysed reaction is beta-D-fructose 1,6-bisphosphate + H2O = beta-D-fructose 6-phosphate + phosphate. Its pathway is carbohydrate biosynthesis; gluconeogenesis. This Ectopseudomonas mendocina (strain ymp) (Pseudomonas mendocina) protein is Fructose-1,6-bisphosphatase class 1.